A 208-amino-acid chain; its full sequence is Probable nicotinate-nucleotide adenylyltransferase (208 aa).

It belongs to the NadD family.

It catalyses the reaction nicotinate beta-D-ribonucleotide + ATP + H(+) = deamido-NAD(+) + diphosphate. Its pathway is cofactor biosynthesis; NAD(+) biosynthesis; deamido-NAD(+) from nicotinate D-ribonucleotide: step 1/1. Catalyzes the reversible adenylation of nicotinate mononucleotide (NaMN) to nicotinic acid adenine dinucleotide (NaAD). This is Probable nicotinate-nucleotide adenylyltransferase from Acidothermus cellulolyticus (strain ATCC 43068 / DSM 8971 / 11B).